The primary structure comprises 425 residues: Type I restriction enzyme MjaVIII specificity subunit (425 aa).

This sequence belongs to the type-I restriction system S methylase family. As to quaternary structure, the type I restriction/modification system is composed of three polypeptides R, M and S.

Its function is as follows. The specificity (S) subunit of a type I restriction enzyme; this subunit dictates DNA sequence specificity. The M and S subunits together form a methyltransferase (MTase) that methylates A-2 on the top and A-3 on the bottom strand of the sequence 5'-GAYN(5)GTAA-3'. In the presence of the R subunit the complex can also act as an endonuclease, binding to the same target sequence but cutting the DNA some distance from this site. Whether the DNA is cut or modified depends on the methylation state of the target sequence. When the target site is unmodified, the DNA is cut. When the target site is hemimethylated, the complex acts as a maintenance MTase modifying the DNA so that both strands become methylated. After locating a non-methylated recognition site, the enzyme complex serves as a molecular motor that translocates DNA in an ATP-dependent manner until a collision occurs that triggers cleavage. The polypeptide is Type I restriction enzyme MjaVIII specificity subunit (Methanocaldococcus jannaschii (strain ATCC 43067 / DSM 2661 / JAL-1 / JCM 10045 / NBRC 100440) (Methanococcus jannaschii)).